The following is a 596-amino-acid chain: ATP-dependent lipid A-core flippase (596 aa).

Transmembrane regions (helical) follow at residues 34–54, 80–100, 138–158, 164–184, 263–283, and 292–312; these read VWVLVAGVLAMAAVAATEAGI, AAVVGLALARAIAQYASGYLL, AVVFEVNQVLSVLMGVMITLV, VVFLLGYLFYLNWRLTLIVAI, QPLTQFLASIALAVVLTIAVV, and VGGFVAFVTAMLLIISPLKHL. Residues 38–321 form the ABC transmembrane type-1 domain; the sequence is VAGVLAMAAV…LMDVNQPLQR (284 aa). In terms of domain architecture, ABC transporter spans 353 to 589; the sequence is IEFSHVSFSY…GGLYAHLHRI (237 aa). 389 to 396 serves as a coordination point for ATP; that stretch reads GPSGSGKT.

The protein belongs to the ABC transporter superfamily. Lipid exporter (TC 3.A.1.106) family. As to quaternary structure, homodimer.

The protein resides in the cell inner membrane. It catalyses the reaction ATP + H2O + lipid A-core oligosaccharideSide 1 = ADP + phosphate + lipid A-core oligosaccharideSide 2.. Functionally, involved in lipopolysaccharide (LPS) biosynthesis. Translocates lipid A-core from the inner to the outer leaflet of the inner membrane. Transmembrane domains (TMD) form a pore in the inner membrane and the ATP-binding domain (NBD) is responsible for energy generation. The chain is ATP-dependent lipid A-core flippase from Burkholderia thailandensis (strain ATCC 700388 / DSM 13276 / CCUG 48851 / CIP 106301 / E264).